A 72-amino-acid chain; its full sequence is Translation initiation factor IF-1 (72 aa).

The S1-like domain occupies methionine 1–lysine 72.

The protein belongs to the IF-1 family. In terms of assembly, component of the 30S ribosomal translation pre-initiation complex which assembles on the 30S ribosome in the order IF-2 and IF-3, IF-1 and N-formylmethionyl-tRNA(fMet); mRNA recruitment can occur at any time during PIC assembly.

The protein resides in the cytoplasm. Its function is as follows. One of the essential components for the initiation of protein synthesis. Stabilizes the binding of IF-2 and IF-3 on the 30S subunit to which N-formylmethionyl-tRNA(fMet) subsequently binds. Helps modulate mRNA selection, yielding the 30S pre-initiation complex (PIC). Upon addition of the 50S ribosomal subunit IF-1, IF-2 and IF-3 are released leaving the mature 70S translation initiation complex. The sequence is that of Translation initiation factor IF-1 from Helicobacter hepaticus (strain ATCC 51449 / 3B1).